Reading from the N-terminus, the 45-residue chain is Cytochrome b559 subunit beta (45 aa).

The chain crosses the membrane as a helical span at residues 20-36; that stretch reads WIAVHTLAVPTVFFLGA. Residue His24 coordinates heme.

Belongs to the PsbE/PsbF family. In terms of assembly, heterodimer of an alpha subunit and a beta subunit. PSII is composed of 1 copy each of membrane proteins PsbA, PsbB, PsbC, PsbD, PsbE, PsbF, PsbH, PsbI, PsbJ, PsbK, PsbL, PsbM, PsbT, PsbX, PsbY, PsbZ, Psb30/Ycf12, peripheral proteins PsbO, CyanoQ (PsbQ), PsbU, PsbV and a large number of cofactors. It forms dimeric complexes. Requires heme b as cofactor.

The protein resides in the cellular thylakoid membrane. Functionally, this b-type cytochrome is tightly associated with the reaction center of photosystem II (PSII). PSII is a light-driven water:plastoquinone oxidoreductase that uses light energy to abstract electrons from H(2)O, generating O(2) and a proton gradient subsequently used for ATP formation. It consists of a core antenna complex that captures photons, and an electron transfer chain that converts photonic excitation into a charge separation. This Nostoc sp. (strain PCC 7120 / SAG 25.82 / UTEX 2576) protein is Cytochrome b559 subunit beta.